Consider the following 238-residue polypeptide: MEKKNINEVIANLSVEQLAGMIDHTFLKPFGTAENIEKLCAEARQYQFAMVAINPAEVETCVKLLEGSGVRVGAAIGFPLGQNTVECKAFETRDAIAKGATEIDTVINVRALQKGQTDIVKKEIEDMVSICKPAGVICKVILETCYLTDEEKETVCRIAKEAGVDFVKTSTGFGTAGANVHDVALMRRVVGPVIGVKAAGGIRDLDTALALIQVGATRIGTSSGIQIVEAYKELKKGL.

The Proton donor/acceptor role is filled by D104. K168 functions as the Schiff-base intermediate with acetaldehyde in the catalytic mechanism. The Proton donor/acceptor role is filled by K197.

It belongs to the DeoC/FbaB aldolase family. DeoC type 1 subfamily.

Its subcellular location is the cytoplasm. It catalyses the reaction 2-deoxy-D-ribose 5-phosphate = D-glyceraldehyde 3-phosphate + acetaldehyde. It participates in carbohydrate degradation; 2-deoxy-D-ribose 1-phosphate degradation; D-glyceraldehyde 3-phosphate and acetaldehyde from 2-deoxy-alpha-D-ribose 1-phosphate: step 2/2. In terms of biological role, catalyzes a reversible aldol reaction between acetaldehyde and D-glyceraldehyde 3-phosphate to generate 2-deoxy-D-ribose 5-phosphate. The protein is Deoxyribose-phosphate aldolase of Bacteroides thetaiotaomicron (strain ATCC 29148 / DSM 2079 / JCM 5827 / CCUG 10774 / NCTC 10582 / VPI-5482 / E50).